Consider the following 636-residue polypeptide: 1-deoxy-D-xylulose-5-phosphate synthase (636 aa).

Thiamine diphosphate contacts are provided by residues His72 and 113 to 115; that span reads GHA. Asp144 contributes to the Mg(2+) binding site. Thiamine diphosphate is bound by residues 145-146, Asn174, Tyr287, and Glu370; that span reads GS. Residue Asn174 participates in Mg(2+) binding.

This sequence belongs to the transketolase family. DXPS subfamily. As to quaternary structure, homodimer. It depends on Mg(2+) as a cofactor. Thiamine diphosphate serves as cofactor.

The catalysed reaction is D-glyceraldehyde 3-phosphate + pyruvate + H(+) = 1-deoxy-D-xylulose 5-phosphate + CO2. The protein operates within metabolic intermediate biosynthesis; 1-deoxy-D-xylulose 5-phosphate biosynthesis; 1-deoxy-D-xylulose 5-phosphate from D-glyceraldehyde 3-phosphate and pyruvate: step 1/1. Catalyzes the acyloin condensation reaction between C atoms 2 and 3 of pyruvate and glyceraldehyde 3-phosphate to yield 1-deoxy-D-xylulose-5-phosphate (DXP). The polypeptide is 1-deoxy-D-xylulose-5-phosphate synthase (Synechococcus elongatus (strain ATCC 33912 / PCC 7942 / FACHB-805) (Anacystis nidulans R2)).